Here is a 58-residue protein sequence, read N- to C-terminus: MIKIFIGHYINVFYSTADITLKKQPLLFLAKLMVYSAALTFFTANFHCNMTRKINEYA.

The protein is Protein YecU of Escherichia coli (strain K12).